The following is a 147-amino-acid chain: MNIGEASKVSGVSSKMIRYYEQIGLISPAVRTASSYRTYGDNDVHTLRFIRRARDLGFSVEQIKELLALWRDRSRASSDVKAVALEHIAELERKIAAIQDMTRTLKHLASHCHGDGRPDCPIIEEMAKGGGAAKTEINPRFGVASLK.

In terms of domain architecture, HTH merR-type spans 1 to 69; sequence MNIGEASKVS…VEQIKELLAL (69 aa). A DNA-binding region (H-T-H motif) is located at residues 4 to 23; the sequence is GEASKVSGVSSKMIRYYEQI.

In terms of assembly, homodimer.

The protein localises to the cytoplasm. Its function is as follows. Regulates the transcription of actP. It detects cytoplasmic copper stress and activates transcription in response to increasing copper concentrations. In the absence of copper, it negatively regulates the transcription of actP. This chain is HTH-type transcriptional regulator HmrR (hmrR), found in Sinorhizobium medicae (strain WSM419) (Ensifer medicae).